Here is a 521-residue protein sequence, read N- to C-terminus: uncharacterized protein (521 aa).

The next 10 membrane-spanning stretches (helical) occupy residues 103 to 123, 136 to 156, 177 to 197, 200 to 220, 259 to 279, 299 to 319, 327 to 346, 358 to 378, 411 to 431, and 450 to 470; these read NLML…VPMP, FWFF…LWIT, YILF…FTAW, ITFT…GISF, AYAH…VYIV, IMYV…SSWI, YALV…VYVR, FVLV…LITM, CVAS…LHFG, and FKLT…ASYL.

The protein resides in the membrane. This is an uncharacterized protein from Schizosaccharomyces pombe (strain 972 / ATCC 24843) (Fission yeast).